A 448-amino-acid chain; its full sequence is Exodeoxyribonuclease 7 large subunit (448 aa).

The protein belongs to the XseA family. As to quaternary structure, heterooligomer composed of large and small subunits.

It localises to the cytoplasm. It carries out the reaction Exonucleolytic cleavage in either 5'- to 3'- or 3'- to 5'-direction to yield nucleoside 5'-phosphates.. Its function is as follows. Bidirectionally degrades single-stranded DNA into large acid-insoluble oligonucleotides, which are then degraded further into small acid-soluble oligonucleotides. The sequence is that of Exodeoxyribonuclease 7 large subunit from Geobacillus kaustophilus (strain HTA426).